The sequence spans 275 residues: 2,3,4,5-tetrahydropyridine-2,6-dicarboxylate N-succinyltransferase (275 aa).

The substrate site is built by arginine 106 and aspartate 143.

This sequence belongs to the transferase hexapeptide repeat family. In terms of assembly, homotrimer.

Its subcellular location is the cytoplasm. The catalysed reaction is (S)-2,3,4,5-tetrahydrodipicolinate + succinyl-CoA + H2O = (S)-2-succinylamino-6-oxoheptanedioate + CoA. It participates in amino-acid biosynthesis; L-lysine biosynthesis via DAP pathway; LL-2,6-diaminopimelate from (S)-tetrahydrodipicolinate (succinylase route): step 1/3. The polypeptide is 2,3,4,5-tetrahydropyridine-2,6-dicarboxylate N-succinyltransferase (Cupriavidus necator (strain ATCC 17699 / DSM 428 / KCTC 22496 / NCIMB 10442 / H16 / Stanier 337) (Ralstonia eutropha)).